The following is a 487-amino-acid chain: 3-octaprenyl-4-hydroxybenzoate carboxy-lyase (487 aa).

Asn172 provides a ligand contact to Mn(2+). Prenylated FMN is bound by residues 175–177 (IYR), 189–191 (RWL), and 194–195 (RG). Glu238 contacts Mn(2+). Asp287 functions as the Proton donor in the catalytic mechanism.

The protein belongs to the UbiD family. As to quaternary structure, homohexamer. Requires prenylated FMN as cofactor. It depends on Mn(2+) as a cofactor.

The protein resides in the cell membrane. The catalysed reaction is a 4-hydroxy-3-(all-trans-polyprenyl)benzoate + H(+) = a 2-(all-trans-polyprenyl)phenol + CO2. It participates in cofactor biosynthesis; ubiquinone biosynthesis. Catalyzes the decarboxylation of 3-octaprenyl-4-hydroxy benzoate to 2-octaprenylphenol, an intermediate step in ubiquinone biosynthesis. In Actinobacillus pleuropneumoniae serotype 5b (strain L20), this protein is 3-octaprenyl-4-hydroxybenzoate carboxy-lyase.